The following is a 504-amino-acid chain: Protein psiD (504 aa).

A signal peptide spans 1 to 21 (MKYSYLLLILLLSNLYKEGFS). Residues Asn87, Asn136, Asn236, Asn252, Asn290, and Asn373 are each glycosylated (N-linked (GlcNAc...) asparagine). The PA14 domain maps to 111-251 (LTRVGDSTYA…YDACGVCDGH (141 aa)). Positions 417–430 (TVTPTVTPTVTPTP) are enriched in low complexity. The tract at residues 417-453 (TVTPTVTPTVTPTPTTTPTPSPTTVPPRPTPTPLPAD) is disordered. The span at 431 to 453 (TTTPTPSPTTVPPRPTPTPLPAD) shows a compositional bias: pro residues. Asn483 carries an N-linked (GlcNAc...) asparagine glycan.

It belongs to the prespore-cell-inducing factor family.

The protein localises to the secreted. The protein is Protein psiD (psiD) of Dictyostelium discoideum (Social amoeba).